The following is a 581-amino-acid chain: Arginine--tRNA ligase (581 aa).

Positions 126–136 match the 'HIGH' region motif; sequence PNLAKEMHVGH.

This sequence belongs to the class-I aminoacyl-tRNA synthetase family. Monomer.

It is found in the cytoplasm. The enzyme catalyses tRNA(Arg) + L-arginine + ATP = L-arginyl-tRNA(Arg) + AMP + diphosphate. This is Arginine--tRNA ligase from Shewanella sp. (strain ANA-3).